We begin with the raw amino-acid sequence, 202 residues long: Small ribosomal subunit protein uS4 (202 aa).

Over residues 1-13 (MSRYRGPRLRVTR) the composition is skewed to basic residues. The tract at residues 1-42 (MSRYRGPRLRVTRRLGELPGLTRKASKKSNPPGQHGQARRKR) is disordered. The 63-residue stretch at 90 to 152 (NRLDNVCFRL…KASKKLVEGN (63 aa)) folds into the S4 RNA-binding domain.

The protein belongs to the universal ribosomal protein uS4 family. As to quaternary structure, part of the 30S ribosomal subunit. Contacts protein S5. The interaction surface between S4 and S5 is involved in control of translational fidelity.

Its function is as follows. One of the primary rRNA binding proteins, it binds directly to 16S rRNA where it nucleates assembly of the body of the 30S subunit. In terms of biological role, with S5 and S12 plays an important role in translational accuracy. In Prochlorococcus marinus (strain MIT 9312), this protein is Small ribosomal subunit protein uS4.